The following is a 193-amino-acid chain: Putative manganese efflux pump MntP (193 aa).

The next 6 helical transmembrane spans lie at Val6 to Cys26, Val39 to Leu59, Ile61 to Gly81, Leu106 to Phe126, Asn132 to Phe152, and Trp165 to His185.

The protein belongs to the MntP (TC 9.B.29) family.

The protein localises to the cell membrane. In terms of biological role, probably functions as a manganese efflux pump. In Dehalococcoides mccartyi (strain ATCC BAA-2266 / KCTC 15142 / 195) (Dehalococcoides ethenogenes (strain 195)), this protein is Putative manganese efflux pump MntP.